The primary structure comprises 626 residues: Myelin-associated glycoprotein (626 aa).

A signal peptide spans Met1–Gly19. Residues Gly20 to Ala325 are interaction with RTN4R and RTN4RL2. Over Gly20–Pro516 the chain is Extracellular. Positions Trp22–Asp120 constitute an Ig-like V-type domain. 3 cysteine pairs are disulfide-bonded: Cys37/Cys165, Cys42/Cys100, and Cys159/Cys217. Tyr65–Lys67 is a binding site for a ganglioside GT1b (d18:1(4E)). N-linked (GlcNAc...) asparagine glycosylation occurs at Asn99. A ganglioside GT1b (d18:1(4E))-binding positions include Arg118 and Tyr124–Thr128. Ig-like C2-type domains follow at residues Asn139 to Lys237, Val241 to Ala325, Trp327 to Ala412, and Pro413 to Arg508. Residues Asn223 and Asn246 are each glycosylated (N-linked (GlcNAc...) asparagine). Residues Cys261 and Cys305 are joined by a disulfide bond. Asn315 and Asn332 each carry an N-linked (GlcNAc...) asparagine glycan. Residues Cys347 and Cys392 are joined by a disulfide bond. Asn406 is a glycosylation site (N-linked (GlcNAc...) asparagine). Cystine bridges form between Cys421–Cys430 and Cys432–Cys488. N-linked (GlcNAc...) asparagine glycosylation is found at Asn450 and Asn454. The chain crosses the membrane as a helical span at residues Val517–Thr536. Cys531 is lipidated: S-palmitoyl cysteine. The Cytoplasmic portion of the chain corresponds to Arg537 to Lys626. Ser545, Ser547, and Ser549 each carry phosphoserine. The required for normal axon myelination in the central nervous system stretch occupies residues Leu577–Lys626. The tract at residues Arg581–Lys608 is disordered.

It belongs to the immunoglobulin superfamily. SIGLEC (sialic acid binding Ig-like lectin) family. As to quaternary structure, monomer and homodimer. Interacts (via the first three N-terminal Ig-like domains) with RTN4R and RTN4RL2. Interacts with isoform 2 of BSG. Post-translationally, N-glycosylated. Phosphorylated on tyrosine residues. In terms of processing, ubiquitinated, leading to proteasomal degradation. As to expression, detected in myelin. Detected in olfactory bulb and throughout the brain (at protein level). Detected in brain.

It localises to the cell membrane. The protein localises to the membrane raft. In terms of biological role, adhesion molecule that mediates interactions between myelinating cells and neurons by binding to neuronal sialic acid-containing gangliosides and to the glycoproteins RTN4R and RTN4RL2. Not required for initial myelination, but seems to play a role in the maintenance of normal axon myelination. Protects motoneurons against apoptosis, also after injury; protection against apoptosis is probably mediated via interaction with neuronal RTN4R and RTN4RL2. Required to prevent degeneration of myelinated axons in adults; this probably depends on binding to gangliosides on the axon cell membrane. Negative regulator of neurite outgrowth; in dorsal root ganglion neurons the inhibition is mediated primarily via binding to neuronal RTN4R or RTN4RL2 and to a lesser degree via binding to neuronal gangliosides. In cerebellar granule cells the inhibition is mediated primarily via binding to neuronal gangliosides. In sensory neurons, inhibition of neurite extension depends only partially on RTN4R, RTN4RL2 and gangliosides. Inhibits axon longitudinal growth. Inhibits axon outgrowth by binding to RTN4R. Preferentially binds to alpha-2,3-linked sialic acid. Binds ganglioside Gt1b. The chain is Myelin-associated glycoprotein (Mag) from Rattus norvegicus (Rat).